Consider the following 147-residue polypeptide: Cystatin-9-like (147 aa).

The N-terminal stretch at 1–28 is a signal peptide; sequence MLGLPWKGGLSWALLLLLLGSQILLIYA. C98 and C108 form a disulfide bridge. N-linked (GlcNAc...) asparagine glycans are attached at residues N117 and N139. An intrachain disulfide couples C122 to C142.

The protein belongs to the cystatin family. As to expression, specifically expressed in testis.

Its subcellular location is the secreted. In Homo sapiens (Human), this protein is Cystatin-9-like (CST9L).